The following is a 338-amino-acid chain: Ketol-acid reductoisomerase (NADP(+)) (338 aa).

In terms of domain architecture, KARI N-terminal Rossmann spans 1-181 (MQVYYDKDCD…GGGRSGIIET (181 aa)). NADP(+)-binding positions include 24–27 (YGSQ), Arg-47, Ser-50, Ser-52, and 82–85 (DEFQ). Residue His-107 is part of the active site. Gly-133 contacts NADP(+). The 146-residue stretch at 182-327 (TFKDETETDL…GKLRAMMPWI (146 aa)) folds into the KARI C-terminal knotted domain. Mg(2+)-binding residues include Asp-190, Glu-194, Glu-226, and Glu-230. Ser-251 provides a ligand contact to substrate.

This sequence belongs to the ketol-acid reductoisomerase family. Mg(2+) serves as cofactor.

It catalyses the reaction (2R)-2,3-dihydroxy-3-methylbutanoate + NADP(+) = (2S)-2-acetolactate + NADPH + H(+). The catalysed reaction is (2R,3R)-2,3-dihydroxy-3-methylpentanoate + NADP(+) = (S)-2-ethyl-2-hydroxy-3-oxobutanoate + NADPH + H(+). Its pathway is amino-acid biosynthesis; L-isoleucine biosynthesis; L-isoleucine from 2-oxobutanoate: step 2/4. It functions in the pathway amino-acid biosynthesis; L-valine biosynthesis; L-valine from pyruvate: step 2/4. Its function is as follows. Involved in the biosynthesis of branched-chain amino acids (BCAA). Catalyzes an alkyl-migration followed by a ketol-acid reduction of (S)-2-acetolactate (S2AL) to yield (R)-2,3-dihydroxy-isovalerate. In the isomerase reaction, S2AL is rearranged via a Mg-dependent methyl migration to produce 3-hydroxy-3-methyl-2-ketobutyrate (HMKB). In the reductase reaction, this 2-ketoacid undergoes a metal-dependent reduction by NADPH to yield (R)-2,3-dihydroxy-isovalerate. The polypeptide is Ketol-acid reductoisomerase (NADP(+)) (Saccharophagus degradans (strain 2-40 / ATCC 43961 / DSM 17024)).